Consider the following 45-residue polypeptide: MEAALLLAKLPEAYQIFDPLVDVLPIIPVFFLLLAFVWQAAVGFR.

A propeptide spanning residues M1–A8 is cleaved from the precursor. A helical transmembrane segment spans residues L24–F44.

This sequence belongs to the PsbK family. In terms of assembly, PSII is composed of 1 copy each of membrane proteins PsbA, PsbB, PsbC, PsbD, PsbE, PsbF, PsbH, PsbI, PsbJ, PsbK, PsbL, PsbM, PsbT, PsbX, PsbY, PsbZ, Psb30/Ycf12, peripheral proteins PsbO, CyanoQ (PsbQ), PsbU, PsbV and a large number of cofactors. It forms dimeric complexes.

The protein resides in the cellular thylakoid membrane. Its function is as follows. One of the components of the core complex of photosystem II (PSII). PSII is a light-driven water:plastoquinone oxidoreductase that uses light energy to abstract electrons from H(2)O, generating O(2) and a proton gradient subsequently used for ATP formation. It consists of a core antenna complex that captures photons, and an electron transfer chain that converts photonic excitation into a charge separation. This Nostoc sp. (strain PCC 7120 / SAG 25.82 / UTEX 2576) protein is Photosystem II reaction center protein K.